The primary structure comprises 644 residues: Exoribonuclease 2 (644 aa).

The RNB domain occupies 189–516 (REDLTALNFV…NHRLLKAVIT (328 aa)). One can recognise an S1 motif domain in the interval 561-643 (DIRFNAEIID…ETRGIVAKPA (83 aa)).

It belongs to the RNR ribonuclease family. RNase II subfamily.

The protein localises to the cytoplasm. The catalysed reaction is Exonucleolytic cleavage in the 3'- to 5'-direction to yield nucleoside 5'-phosphates.. Functionally, involved in mRNA degradation. Hydrolyzes single-stranded polyribonucleotides processively in the 3' to 5' direction. In Pectobacterium atrosepticum (strain SCRI 1043 / ATCC BAA-672) (Erwinia carotovora subsp. atroseptica), this protein is Exoribonuclease 2.